Reading from the N-terminus, the 152-residue chain is Ribosome maturation factor RimP (152 aa).

The protein belongs to the RimP family.

It is found in the cytoplasm. Its function is as follows. Required for maturation of 30S ribosomal subunits. The protein is Ribosome maturation factor RimP of Yersinia enterocolitica serotype O:8 / biotype 1B (strain NCTC 13174 / 8081).